Consider the following 94-residue polypeptide: DNA-directed RNA polymerase subunit omega (94 aa).

Belongs to the RNA polymerase subunit omega family. In terms of assembly, the RNAP catalytic core consists of 2 alpha, 1 beta, 1 beta' and 1 omega subunit. When a sigma factor is associated with the core the holoenzyme is formed, which can initiate transcription.

The catalysed reaction is RNA(n) + a ribonucleoside 5'-triphosphate = RNA(n+1) + diphosphate. Its function is as follows. Promotes RNA polymerase assembly. Latches the N- and C-terminal regions of the beta' subunit thereby facilitating its interaction with the beta and alpha subunits. This is DNA-directed RNA polymerase subunit omega from Bifidobacterium animalis subsp. lactis (strain AD011).